The following is a 484-amino-acid chain: Glutamate--tRNA ligase (484 aa).

Residues 11-21 carry the 'HIGH' region motif; the sequence is PSPTGYLHIGN. The 'KMSKS' region signature appears at 252-256; it reads KLSKR. Lys-255 contacts ATP.

Belongs to the class-I aminoacyl-tRNA synthetase family. Glutamate--tRNA ligase type 1 subfamily. Monomer.

The protein localises to the cytoplasm. The catalysed reaction is tRNA(Glu) + L-glutamate + ATP = L-glutamyl-tRNA(Glu) + AMP + diphosphate. Functionally, catalyzes the attachment of glutamate to tRNA(Glu) in a two-step reaction: glutamate is first activated by ATP to form Glu-AMP and then transferred to the acceptor end of tRNA(Glu). The protein is Glutamate--tRNA ligase of Staphylococcus aureus (strain Mu3 / ATCC 700698).